The chain runs to 278 residues: Tryptophan synthase alpha chain (278 aa).

Catalysis depends on proton acceptor residues E50 and D61.

The protein belongs to the TrpA family. Tetramer of two alpha and two beta chains.

It carries out the reaction (1S,2R)-1-C-(indol-3-yl)glycerol 3-phosphate + L-serine = D-glyceraldehyde 3-phosphate + L-tryptophan + H2O. It participates in amino-acid biosynthesis; L-tryptophan biosynthesis; L-tryptophan from chorismate: step 5/5. The alpha subunit is responsible for the aldol cleavage of indoleglycerol phosphate to indole and glyceraldehyde 3-phosphate. The protein is Tryptophan synthase alpha chain of Rhodopseudomonas palustris (strain ATCC BAA-98 / CGA009).